Consider the following 504-residue polypeptide: ATP synthase subunit alpha (504 aa).

Residue 169-176 coordinates ATP; it reads GDRQTGKT.

Belongs to the ATPase alpha/beta chains family. In terms of assembly, F-type ATPases have 2 components, CF(1) - the catalytic core - and CF(0) - the membrane proton channel. CF(1) has five subunits: alpha(3), beta(3), gamma(1), delta(1), epsilon(1). CF(0) has three main subunits: a(1), b(2) and c(9-12). The alpha and beta chains form an alternating ring which encloses part of the gamma chain. CF(1) is attached to CF(0) by a central stalk formed by the gamma and epsilon chains, while a peripheral stalk is formed by the delta and b chains.

Its subcellular location is the cell membrane. The catalysed reaction is ATP + H2O + 4 H(+)(in) = ADP + phosphate + 5 H(+)(out). Produces ATP from ADP in the presence of a proton gradient across the membrane. The alpha chain is a regulatory subunit. The sequence is that of ATP synthase subunit alpha from Clostridium botulinum (strain ATCC 19397 / Type A).